A 271-amino-acid chain; its full sequence is Ribosomal RNA small subunit methyltransferase A (271 aa).

S-adenosyl-L-methionine contacts are provided by asparagine 18, leucine 20, glycine 45, glutamate 66, aspartate 91, and asparagine 112.

Belongs to the class I-like SAM-binding methyltransferase superfamily. rRNA adenine N(6)-methyltransferase family. RsmA subfamily.

It localises to the cytoplasm. It carries out the reaction adenosine(1518)/adenosine(1519) in 16S rRNA + 4 S-adenosyl-L-methionine = N(6)-dimethyladenosine(1518)/N(6)-dimethyladenosine(1519) in 16S rRNA + 4 S-adenosyl-L-homocysteine + 4 H(+). In terms of biological role, specifically dimethylates two adjacent adenosines (A1518 and A1519) in the loop of a conserved hairpin near the 3'-end of 16S rRNA in the 30S particle. May play a critical role in biogenesis of 30S subunits. The sequence is that of Ribosomal RNA small subunit methyltransferase A from Vibrio atlanticus (strain LGP32) (Vibrio splendidus (strain Mel32)).